The following is a 147-amino-acid chain: MHTIIELDNQTTLNVDIEALEKIAQSLTNREIELIITDNENIQELNREYRDRDNPTDVLSFPLETPFTEQSVFDIPLGTIVISADFVRERAKTYGHTEQDELKLLFIHGLLHLLGYDHETDEGEMRQKEREIIEEFGLPSSLIIRND.

Residues H108, H112, and H118 each coordinate Zn(2+).

It belongs to the endoribonuclease YbeY family. The cofactor is Zn(2+).

Its subcellular location is the cytoplasm. Single strand-specific metallo-endoribonuclease involved in late-stage 70S ribosome quality control and in maturation of the 3' terminus of the 16S rRNA. In Sulfurovum sp. (strain NBC37-1), this protein is Endoribonuclease YbeY.